A 915-amino-acid polypeptide reads, in one-letter code: Isoleucine--tRNA ligase (915 aa).

The short motif at Pro-58–His-68 is the 'HIGH' region element. Glu-568 provides a ligand contact to L-isoleucyl-5'-AMP. The 'KMSKS' region signature appears at Lys-609–Ser-613. Lys-612 is a binding site for ATP. Zn(2+)-binding residues include Cys-892, Cys-895, Cys-907, and Cys-910.

It belongs to the class-I aminoacyl-tRNA synthetase family. IleS type 1 subfamily. In terms of assembly, monomer. Requires Zn(2+) as cofactor.

The protein resides in the cytoplasm. The catalysed reaction is tRNA(Ile) + L-isoleucine + ATP = L-isoleucyl-tRNA(Ile) + AMP + diphosphate. Catalyzes the attachment of isoleucine to tRNA(Ile). As IleRS can inadvertently accommodate and process structurally similar amino acids such as valine, to avoid such errors it has two additional distinct tRNA(Ile)-dependent editing activities. One activity is designated as 'pretransfer' editing and involves the hydrolysis of activated Val-AMP. The other activity is designated 'posttransfer' editing and involves deacylation of mischarged Val-tRNA(Ile). This chain is Isoleucine--tRNA ligase, found in Wolinella succinogenes (strain ATCC 29543 / DSM 1740 / CCUG 13145 / JCM 31913 / LMG 7466 / NCTC 11488 / FDC 602W) (Vibrio succinogenes).